Here is a 120-residue protein sequence, read N- to C-terminus: NAD(P)H-quinone oxidoreductase subunit 3, chloroplastic (120 aa).

3 helical membrane passes run tyrosine 7–leucine 27, methionine 64–methionine 84, and phenylalanine 89–valine 109.

It belongs to the complex I subunit 3 family. NDH is composed of at least 16 different subunits, 5 of which are encoded in the nucleus.

It localises to the plastid. The protein resides in the chloroplast thylakoid membrane. It carries out the reaction a plastoquinone + NADH + (n+1) H(+)(in) = a plastoquinol + NAD(+) + n H(+)(out). The enzyme catalyses a plastoquinone + NADPH + (n+1) H(+)(in) = a plastoquinol + NADP(+) + n H(+)(out). In terms of biological role, NDH shuttles electrons from NAD(P)H:plastoquinone, via FMN and iron-sulfur (Fe-S) centers, to quinones in the photosynthetic chain and possibly in a chloroplast respiratory chain. The immediate electron acceptor for the enzyme in this species is believed to be plastoquinone. Couples the redox reaction to proton translocation, and thus conserves the redox energy in a proton gradient. This chain is NAD(P)H-quinone oxidoreductase subunit 3, chloroplastic, found in Marchantia polymorpha (Common liverwort).